Here is a 338-residue protein sequence, read N- to C-terminus: Methionine import ATP-binding protein MetN 1 (338 aa).

One can recognise an ABC transporter domain in the interval 2-241 (IELHQVSKSF…AKHATTKRFV (240 aa)). 38–45 (GYSGAGKS) is an ATP binding site.

The protein belongs to the ABC transporter superfamily. Methionine importer (TC 3.A.1.24) family. As to quaternary structure, the complex is composed of two ATP-binding proteins (MetN), two transmembrane proteins (MetI) and a solute-binding protein (MetQ).

The protein resides in the cell membrane. It carries out the reaction L-methionine(out) + ATP + H2O = L-methionine(in) + ADP + phosphate + H(+). It catalyses the reaction D-methionine(out) + ATP + H2O = D-methionine(in) + ADP + phosphate + H(+). In terms of biological role, part of the ABC transporter complex MetNIQ involved in methionine import. Responsible for energy coupling to the transport system. The protein is Methionine import ATP-binding protein MetN 1 of Listeria innocua serovar 6a (strain ATCC BAA-680 / CLIP 11262).